The primary structure comprises 179 residues: Coatomer subunit zeta-2 (179 aa).

It belongs to the adaptor complexes small subunit family. As to quaternary structure, oligomeric complex that consists of at least the alpha, beta, beta', gamma, delta, epsilon and zeta subunits.

Its subcellular location is the cytoplasm. It is found in the golgi apparatus membrane. The protein localises to the cytoplasmic vesicle. The protein resides in the COPI-coated vesicle membrane. Its function is as follows. The coatomer is a cytosolic protein complex that binds to dilysine motifs and reversibly associates with Golgi non-clathrin-coated vesicles, which further mediate biosynthetic protein transport from the ER, via the Golgi up to the trans Golgi network. Coatomer complex is required for budding from Golgi membranes, and is essential for the retrograde Golgi-to-ER transport of dilysine-tagged proteins. The zeta subunit may be involved in regulating the coat assembly and, hence, the rate of biosynthetic protein transport due to its association-dissociation properties with the coatomer complex. In Arabidopsis thaliana (Mouse-ear cress), this protein is Coatomer subunit zeta-2.